The primary structure comprises 146 residues: Transcriptional regulator MraZ (146 aa).

2 consecutive SpoVT-AbrB domains span residues 5 to 52 (SAAL…PRAE) and 81 to 124 (AAEI…KEES).

This sequence belongs to the MraZ family. In terms of assembly, forms oligomers.

The protein localises to the cytoplasm. It is found in the nucleoid. The chain is Transcriptional regulator MraZ from Alcanivorax borkumensis (strain ATCC 700651 / DSM 11573 / NCIMB 13689 / SK2).